Consider the following 98-residue polypeptide: Ferredoxin-like protein (98 aa).

It to ferredoxins from P.putida and C.tartarivorum, ferredoxin I from A.vinelandii, ferredoxin II from D.desulfuricans.

In terms of biological role, could be a 3Fe-4S cluster-containing protein. The sequence is that of Ferredoxin-like protein (fixX) from Rhizobium leguminosarum.